The following is a 104-amino-acid chain: Flagellar hook-basal body complex protein FliE (104 aa).

It belongs to the FliE family.

The protein localises to the bacterial flagellum basal body. This Edwardsiella ictaluri (strain 93-146) protein is Flagellar hook-basal body complex protein FliE.